The primary structure comprises 876 residues: Alanine--tRNA ligase (876 aa).

4 residues coordinate Zn(2+): histidine 562, histidine 566, cysteine 666, and histidine 670.

The protein belongs to the class-II aminoacyl-tRNA synthetase family. Requires Zn(2+) as cofactor.

The protein resides in the cytoplasm. The catalysed reaction is tRNA(Ala) + L-alanine + ATP = L-alanyl-tRNA(Ala) + AMP + diphosphate. Its function is as follows. Catalyzes the attachment of alanine to tRNA(Ala) in a two-step reaction: alanine is first activated by ATP to form Ala-AMP and then transferred to the acceptor end of tRNA(Ala). Also edits incorrectly charged Ser-tRNA(Ala) and Gly-tRNA(Ala) via its editing domain. The protein is Alanine--tRNA ligase of Marinobacter nauticus (strain ATCC 700491 / DSM 11845 / VT8) (Marinobacter aquaeolei).